An 84-amino-acid polypeptide reads, in one-letter code: U4-theraphotoxin-Hhn1a (84 aa).

A signal peptide spans 1-22 (MKVTLIAILTCAAVLVLHTTAA). Positions 23–47 (EELEESQLMEVGMPDTELAAVDEER) are excised as a propeptide. Disulfide bonds link C51–C65, C55–C76, and C70–C81.

Belongs to the neurotoxin 12 (Hwtx-2) family. 02 (Hwtx-2) subfamily. As to expression, expressed by the venom gland.

It is found in the secreted. Postsynaptic neurotoxin. This is U4-theraphotoxin-Hhn1a from Cyriopagopus hainanus (Chinese bird spider).